A 2382-amino-acid chain; its full sequence is Serine/threonine-protein kinase WNK1 (2382 aa).

Disordered regions lie at residues 1-81 and 95-203; these read MSGG…RFFR and LPGL…QQDD. Residues Ser15 and Ser19 each carry the phosphoserine modification. Residues 50–66 show a composition bias toward basic and acidic residues; that stretch reads RTEEYRRRRHTMDKDSR. Thr60 bears the Phosphothreonine mark. 2 stretches are compositionally biased toward low complexity: residues 95–108 and 125–153; these read LPGLPLSLPQPSIP and VTATATSQVAQQPPAAAAPGEQAVAGPAP. Residues Ser167 and Ser174 each carry the phosphoserine modification. Residues 221–479 form the Protein kinase domain; that stretch reads LKFDIEIGRG…IKDLLNHAFF (259 aa). ATP is bound at residue Ser231. Chloride is bound by residues Phe283 and Leu299. ATP-binding positions include 301-304 and Lys351; that span reads TELM. The active-site Proton acceptor is the Asp368. The chloride site is built by Leu369 and Leu371. 2 positions are modified to phosphoserine; by autocatalysis: Ser378 and Ser382. The tract at residues 488 to 555 is autoinhibitory domain; it reads ELAEEDDGEK…VCEGDHKTMA (68 aa). Positions 573–588 are enriched in basic and acidic residues; it reads QLVREEQEKKKQEESS. 3 disordered regions span residues 573 to 779, 1018 to 1041, and 1053 to 1119; these read QLVR…QPQA, QPGGSLAQAPTTSSQQAVLESTQG, and VAQT…SRPK. A compositionally biased stretch (polar residues) spans 598–614; the sequence is ASQTGIKQLPSASTGIP. Positions 615–625 are enriched in low complexity; sequence TASTTSASVST. The interaction with KLHL3 stretch occupies residues 628 to 638; it reads EPEEPEADQHQ. A compositionally biased stretch (polar residues) spans 637 to 689; that stretch reads HQQLQYQQPSISVLSDGTVDSGQGSSVFTESRVSSQQTVSYGSQHEQAHSTGT. Low complexity predominate over residues 709-779; the sequence is PPSSVAQGQS…TAQPVSQPQA (71 aa). Residues 1025 to 1041 are compositionally biased toward polar residues; sequence QAPTTSSQQAVLESTQG. A compositionally biased stretch (low complexity) spans 1053-1077; it reads VAQTQATQPTTLASSVDSAHSDVAS. The segment covering 1080 to 1090 has biased composition (polar residues); sequence SDGNENVPSSS. The span at 1098-1119 shows a compositional bias: basic residues; that stretch reads TKRHYRKSVRSRSRHEKTSRPK. The RFXV motif 1 motif lies at 1257–1260; that stretch reads RFIV. The residue at position 1261 (Ser1261) is a Phosphoserine. Composition is skewed to low complexity over residues 1457 to 1467 and 1733 to 1745; these read SASAGGSTATP and QVSTPVSTTTSGV. Disordered regions lie at residues 1457–1476 and 1733–1790; these read SASAGGSTATPGPKPPAVVS and QVST…TQSQ. Thr1848 carries the post-translational modification Phosphothreonine. The short motif at 1859-1862 is the RFXV motif 2 element; it reads RFQV. The segment at 1866 to 1948 is disordered; it reads ADGAQKEGKN…QPTKVGRFQV (83 aa). Residues 1869-1884 show a composition bias toward basic and acidic residues; that stretch reads AQKEGKNKSEDAKSVH. A compositionally biased stretch (low complexity) spans 1887 to 1905; that stretch reads SSTSESSVLSSSSPESTLV. A compositionally biased stretch (polar residues) spans 1927–1940; it reads KTTASEAKSDTGQP. 2 short sequence motifs (RFXV motif) span residues 1945-1948 and 1957-1960; these read RFQV and RFSV. 7 positions are modified to phosphoserine: Ser1978, Ser2002, Ser2011, Ser2012, Ser2027, Ser2029, and Ser2032. The span at 1994 to 2003 shows a compositional bias: basic and acidic residues; the sequence is PKKEKPELSE. Disordered stretches follow at residues 1994 to 2069 and 2101 to 2196; these read PKKE…DIED and LYTK…NLYS. Residues 2035 to 2062 show a composition bias toward low complexity; that stretch reads QLSSKSLPSQNLSQSLSNSFNSSYMSSD. Ser2121 is modified (phosphoserine). The segment covering 2122-2134 has biased composition (basic residues); it reads GRRRRPTKSKGSK. Over residues 2135 to 2145 the composition is skewed to low complexity; the sequence is SSRSSSLGNKS. Polar residues-rich tracts occupy residues 2146–2167 and 2175–2196; these read PQLSGNLSGQSAASVLHPQQTL and ESGQNQLLQPLKPSPSSDNLYS. Residues 2241-2261 are amphipathic alpha-helix; the sequence is SRKGTFTDDLHKLVDNWARDA. Phosphoserine is present on residues Ser2270 and Ser2286. Residues 2332–2352 form a disordered region; sequence PFGAQWSGTGGPAPQPLGQFQ. Phosphoserine is present on residues Ser2370 and Ser2372.

The protein belongs to the protein kinase superfamily. Ser/Thr protein kinase family. WNK subfamily. As to quaternary structure, interacts with WNK3. Interacts with WNK4; inhibiting the activity of WNK4. Interacts with SGK1; promoting its activation. Associates with the mTORC2 complex. Interacts with UVRAG. Interacts (via amphipathic alpha-helix region) with EMC2; promoting the ER membrane protein complex assembly. In terms of assembly, interacts with isoform 1; inhibiting isoform 1 activity. Requires Mg(2+) as cofactor. Post-translationally, autophosphorylated at Ser-378 and Ser-382, promoting its activity. Autophosphorylation at Ser-382 is inhibited by intracellular calcium. Phosphorylation at Thr-60 increases ability to activate SGK1. Ubiquitinated by the BCR(KLHL3) complex, leading to its degradation. Also ubiquitinated by the BCR(KLHL2) complex. In terms of processing, may be O-glycosylated. In terms of tissue distribution, widely expressed, with highest levels observed in the testis, heart, kidney and skeletal muscle. Strong expression in dorsal root ganglia and spinal cord. As to expression, this isoform is kidney-specific and specifically expressed in the distal convoluted tubule (DCT) and connecting tubule (CNT) of the nephron.

The protein localises to the cytoplasm. It localises to the nucleus. It is found in the cytoskeleton. The protein resides in the spindle. It carries out the reaction L-seryl-[protein] + ATP = O-phospho-L-seryl-[protein] + ADP + H(+). The catalysed reaction is L-threonyl-[protein] + ATP = O-phospho-L-threonyl-[protein] + ADP + H(+). Activated in response to hyperosmotic stress: cell shrinkage promotes formation of a membraneless compartment that concentrates WNK1 with its substrates, OXSR1/OSR1 and STK39/SPAK. Activation requires autophosphorylation of Ser-382 and, to a lower extent, Ser-378. Autophosphorylation and subsequent activation is inhibited by increases in intracellular ionic strength: Cl(-) potently inhibits WNK1 kinase activity via direct binding. Also inhibited by K(+) ions. Inhibited by small compounds staurosporine, tyrphostin 47, as well as Src tyrosine kinase inhibitors PP1 and PP2. Its function is as follows. Serine/threonine-protein kinase component of the WNK1-SPAK/OSR1 kinase cascade, which acts as a key regulator of blood pressure and regulatory volume increase by promoting ion influx. WNK1 mediates regulatory volume increase in response to hyperosmotic stress by acting as a molecular crowding sensor, which senses cell shrinkage and mediates formation of a membraneless compartment by undergoing liquid-liquid phase separation. The membraneless compartment concentrates WNK1 with its substrates, OXSR1/OSR1 and STK39/SPAK, promoting WNK1-dependent phosphorylation and activation of downstream kinases OXSR1/OSR1 and STK39/SPAK. Following activation, OXSR1/OSR1 and STK39/SPAK catalyze phosphorylation of ion cotransporters SLC12A1/NKCC2, SLC12A2/NKCC1, SLC12A5/KCC2 and SLC12A6/KCC3, regulating their activity. Phosphorylation of Na-K-Cl cotransporters SLC12A2/NKCC1 and SLC12A2/NKCC1 promote their activation and ion influx; simultaneously, phosphorylation of K-Cl cotransporters SLC12A5/KCC2 and SLC12A6/KCC3 inhibit their activity, blocking ion efflux. Also acts as a regulator of angiogenesis in endothelial cells via activation of OXSR1/OSR1 and STK39/SPAK: activation of OXSR1/OSR1 regulates chemotaxis and invasion, while STK39/SPAK regulates endothelial cell proliferation. Also acts independently of the WNK1-SPAK/OSR1 kinase cascade by catalyzing phosphorylation of other substrates, such as SYT2, PCF11 and NEDD4L. Mediates phosphorylation of SYT2, regulating SYT2 association with phospholipids and membrane-binding. Regulates mRNA export in the nucleus by mediating phosphorylation of PCF11, thereby decreasing the association between PCF11 and POLR2A/RNA polymerase II and promoting mRNA export to the cytoplasm. Acts as a negative regulator of autophagy. Required for the abscission step during mitosis, independently of the WNK1-SPAK/OSR1 kinase cascade. May also play a role in actin cytoskeletal reorganization. Also acts as a scaffold protein independently of its protein kinase activity: negatively regulates cell membrane localization of various transporters and channels, such as SLC4A4, SLC26A6, SLC26A9, TRPV4 and CFTR. Involved in the regulation of epithelial Na(+) channel (ENaC) by promoting activation of SGK1 in a kinase-independent manner: probably acts as a scaffold protein that promotes the recruitment of SGK1 to the mTORC2 complex in response to chloride, leading to mTORC2-dependent phosphorylation and activation of SGK1. Acts as an assembly factor for the ER membrane protein complex independently of its protein kinase activity: associates with EMC2 in the cytoplasm via its amphipathic alpha-helix, and prevents EMC2 ubiquitination and subsequent degradation, thereby promoting EMC2 stabilization. Functionally, kinase-defective isoform specifically expressed in kidney, which acts as a dominant-negative regulator of the longer isoform 1. Does not directly inhibit WNK4 and has no direct effect on sodium and chloride ion transport. Down-regulates sodium-chloride cotransporter activity indirectly by inhibiting isoform 1, it associates with isoform 1 and attenuates its kinase activity. In kidney, may play an important role regulating sodium and potassium balance. The chain is Serine/threonine-protein kinase WNK1 from Homo sapiens (Human).